We begin with the raw amino-acid sequence, 239 residues long: Ribosomal RNA small subunit methyltransferase G (239 aa).

S-adenosyl-L-methionine is bound by residues glycine 79, phenylalanine 84, 130–131 (AE), and arginine 149.

The protein belongs to the methyltransferase superfamily. RNA methyltransferase RsmG family.

Its subcellular location is the cytoplasm. Specifically methylates the N7 position of a guanine in 16S rRNA. The protein is Ribosomal RNA small subunit methyltransferase G of Pelotomaculum thermopropionicum (strain DSM 13744 / JCM 10971 / SI).